The following is a 334-amino-acid chain: Kihadalactone A synthase LFS (334 aa).

In terms of domain architecture, Fe2OG dioxygenase spans 181-286 (KTASYSNMFH…RYSTGLFLCP (106 aa)). His208, Asp210, and His269 together coordinate Fe cation. Arg277 contributes to the 2-oxoglutarate binding site.

The protein belongs to the iron/ascorbate-dependent oxidoreductase family. It depends on Fe(2+) as a cofactor. In terms of tissue distribution, expressed in maturing fruits and in juice vesicles.

The catalysed reaction is (1R,2R,3S,8R,10R,11R,15S,16S)-3-(acetyloxy)-15-(1-hydroxy-4-oxobutan-2-yl)-2,7,7,11,16-pentamethyl-5-oxo-6-oxatetracyclo[9.7.0.0(2,8).0(12,16)]octadec-12-en-10-yl acetate + 2-oxoglutarate + O2 = kihadalactone A + succinate + CO2 + 2 H2O. Its pathway is secondary metabolite biosynthesis; terpenoid biosynthesis. Functionally, 2-oxoglutarate-Fe(II) type oxidoreductase involved in the biosynthesis of limonoids triterpene natural products such as limonin, a compound with insecticidal activity responsible for the bitter taste in citrus. Catalyzes the formation of kihadalactone A. This chain is Kihadalactone A synthase LFS, found in Citrus sinensis (Sweet orange).